Reading from the N-terminus, the 463-residue chain is MRSLSSIALLSVVGAASAQAGPWAQCGGKSFSGSSECASGWKCQELNEWFSQCVPGAESTTPTVSSTPTPTDAPSVSITASVTTGINKSISVSSASKSTPLPSSSSASPSPRPTGSGSFAKADGLQFSIDGETKYFAGTNAYWLPFQMNDADIDSVFDHLEQAGLKILRVWGFNDVNTAPSPGTVYFQLHDKEKGTSTINTGKDGLQRLDYVVAAAEKHGVKLIIPFVNSWDDYGGYNAYVKAYGGSKTEWFTNEKIQSVYQAYIKAVVSRYRDSPAIFAWELGNEPRCSGCSTDVIHGWATKISAYIKSLDPNHMVALGDEGMGLTIGSDQSYPYGTSEGNDFEKNLAIPDIDFGTLHLYTTDWGIKDNAWGNGWVENHAKACKAAGKPCLFEEYGMKGNHCTDELKWQKTSLSSGTAADLIWQYGQQLSTGESPKDAYSIFYGTDEWKCAVMDHMENVNKN.

A signal peptide spans 1-18 (MRSLSSIALLSVVGAASA). The 36-residue stretch at 19 to 54 (QAGPWAQCGGKSFSGSSECASGWKCQELNEWFSQCV) folds into the CBM1 domain. The disordered stretch occupies residues 57–78 (AESTTPTVSSTPTPTDAPSVSI). Low complexity predominate over residues 59-77 (STTPTVSSTPTPTDAPSVS). The interval 75 to 118 (SVSITASVTTGINKSISVSSASKSTPLPSSSSASPSPRPTGSGS) is ser-rich linker. The N-linked (GlcNAc...) asparagine glycan is linked to asparagine 87. The span at 93–118 (SSASKSTPLPSSSSASPSPRPTGSGS) shows a compositional bias: low complexity. The segment at 93–121 (SSASKSTPLPSSSSASPSPRPTGSGSFAK) is disordered. Residues 119-463 (FAKADGLQFS…MDHMENVNKN (345 aa)) are catalytic. The substrate site is built by tryptophan 171 and asparagine 285. Glutamate 286 serves as the catalytic Proton donor/acceptor. Tyrosine 361 is a binding site for substrate. Glutamate 395 acts as the Nucleophile in catalysis. Tryptophan 424 contacts substrate.

It belongs to the glycosyl hydrolase 5 (cellulase A) family.

The protein localises to the secreted. It carries out the reaction Random hydrolysis of (1-&gt;4)-beta-D-mannosidic linkages in mannans, galactomannans and glucomannans.. Functionally, endo-1,4-mannanase, a crucial enzyme for depolymerization of seed galactomannans and wood galactoglucomannans. The sequence is that of Probable mannan endo-1,4-beta-mannosidase F (manF) from Aspergillus oryzae (strain ATCC 42149 / RIB 40) (Yellow koji mold).